The following is a 196-amino-acid chain: Pro-FMRFamide-related neuropeptide VF (196 aa).

The first 21 residues, 1 to 21 (MEIISLKRFILLMLATSSLLT), serve as a signal peptide directing secretion. A propeptide spanning residues 22–57 (SNIFCTDESRMPNLYSKKNYDKYSEPRGDLGWEKER) is cleaved from the precursor. Residue Phe92 is modified to Phenylalanine amide. Propeptides lie at residues 95–99 (NMEEE) and 115–121 (NREDSLS). At Phe131 the chain carries Phenylalanine amide. The propeptide occupies 134–196 (TTTAKSITKT…IDDAELKQEK (63 aa)).

This sequence belongs to the FARP (FMRFamide related peptide) family.

Its subcellular location is the secreted. Its function is as follows. Efficiently inhibits forskolin-induced production of cAMP. Acts as a potent negative regulator of gonadotropin synthesis and secretion. Induces secretion of prolactin. Functionally, efficiently inhibits forskolin-induced production of cAMP. Blocks morphine-induced analgesia. In terms of biological role, shows no inhibitory activity of forskolin-induced production of cAMP. The chain is Pro-FMRFamide-related neuropeptide VF (NPVF) from Bos taurus (Bovine).